Reading from the N-terminus, the 116-residue chain is MNLVTTIITITITLSAVLATISFWLPQISPDAEKLSPYECGFDPLGSARLPFSLRFFLIAILFLLFDLEIALLLPLPWGDQLNAPTLTLLWSTAVLALLTLGLIYEWTQGGLEWAE.

3 consecutive transmembrane segments (helical) span residues 3 to 23 (LVTTIITITITLSAVLATISF), 56 to 76 (FFLIAILFLLFDLEIALLLPL), and 84 to 104 (APTLTLLWSTAVLALLTLGLI).

It belongs to the complex I subunit 3 family.

The protein localises to the mitochondrion membrane. It catalyses the reaction a ubiquinone + NADH + 5 H(+)(in) = a ubiquinol + NAD(+) + 4 H(+)(out). Its function is as follows. Core subunit of the mitochondrial membrane respiratory chain NADH dehydrogenase (Complex I) that is believed to belong to the minimal assembly required for catalysis. Complex I functions in the transfer of electrons from NADH to the respiratory chain. The immediate electron acceptor for the enzyme is believed to be ubiquinone. The sequence is that of NADH-ubiquinone oxidoreductase chain 3 (MT-ND3) from Oncorhynchus nerka (Sockeye salmon).